Reading from the N-terminus, the 406-residue chain is Homocysteine-responsive endoplasmic reticulum-resident ubiquitin-like domain member 2 protein (406 aa).

The Ubiquitin-like domain maps to 10–89 (VTLIIKAPNQ…HMVHLVCTSR (80 aa)). Residues 86-154 (CTSRTPPSSP…TLPQAQTDQA (69 aa)) are disordered. Composition is skewed to low complexity over residues 87 to 98 (TSRTPPSSPKSS) and 106 to 126 (ALAS…PSSG). The span at 127–154 (QETLSLAVGSSSEGLRQRTLPQAQTDQA) shows a compositional bias: polar residues. The chain crosses the membrane as a helical span at residues 302–322 (FIMVMGAMLLVYLHQAGWFPF).

It is found in the membrane. Functionally, could be involved in the unfolded protein response (UPR) pathway. This is Homocysteine-responsive endoplasmic reticulum-resident ubiquitin-like domain member 2 protein (HERPUD2) from Homo sapiens (Human).